The primary structure comprises 346 residues: Heterogeneous nuclear ribonucleoprotein A1 (346 aa).

RRM domains are found at residues 23-123 (RKIF…GVRE) and 114-191 (KRLY…KGLS). Composition is skewed to basic and acidic residues over residues 92–107 (TVDP…KNRS) and 189–215 (GLSK…RDGQ). Disordered regions lie at residues 92 to 111 (TVDP…ESNV) and 189 to 346 (GLSK…NRNY). Gly residues-rich tracts occupy residues 216 to 296 (RGGY…GWGG) and 303 to 331 (GGWG…GGQS). Residues 332 to 346 (GAQQWAHAQGGNRNY) show a composition bias toward low complexity.

The protein localises to the nucleus. It localises to the chromosome. It is found in the telomere. Its function is as follows. This protein is a component of ribonucleosomes. Overexpression gradually increases telomere length, leading to increase lifespan. The chain is Heterogeneous nuclear ribonucleoprotein A1 from Caenorhabditis elegans.